A 2258-amino-acid polypeptide reads, in one-letter code: MFPALPCPWVLVVLGTSWAAWGNLGTEAARVRQFYVAAQSISWNYHPEPTHPSSSPFATSFKKIVYREYEAYFQKEKPPSRMSGLLGPTLYADVGDIMKVHFRNKADKPLSIHPQGIKYSKFAEGASYPDHTFLVEKMDDAVAPGQEYTYEWNISEDSGPTHNDPPCLTHIYYSYENLIQDFNSGLIGPLLICKKGTLTEDGIQKMFDKQYVLMFAVFDESKSWNQSSSLMYTVNGYVNGTMPDITVCAYDHISWHLIGMSSGPELFSIHFSGQVLEQNHHKVSAITLVSATSTTANMTVSPEGKWPISSLIPKHFQAGMQAYIDIKNCAKKTRKPKKLTRDQRRHIKRWEYFIAAEEVIWDYAPIIPANMDKKYRSLHLDNFSNQIGKHYKKVVYKQYQDESFTKRLENPNNKEDGILGPVIRAQVRDTLKIVFKNMASRSYSIYPHGVTFSPYEDDVNSSSTSDNNTMIRAVQPGETYTYKWNILESDEPTENDAQCLTRPYYSNVDITRDIASGLIGLLLICKSRSLDKRGIQRTADIEQKAVFAVFDENKSWYIEDNIYKFCENPEKVKRDDPKFYESNIMSTINGYVPESIPTLGFCFDDTVQWHFCSVRTHDNILTIHFTGHSFIYGKRHEDTLTLFPMRGESVTVTMDNVGTWMLTTMNSNPRNKKLQLKFRDVKCIRDDDEDSYEIIYEPSSSTTLTTRKMHDSSENKEEENDDEYDYQDLLASVLGIRSFRNSSLYQEDDEFNLTALALENNSEFIPPSTDRAVDSNSSSPGNISRAPANTFTEPRKILPHPEATKAGSPRRHTGLVKNLVLNRRRTQHSDPYSEDPIENPLQSVITGISLLPFGTEGFRNREHPKHKRFKAGRDQAAKHRFSQMEFPAHKTGRHISQDNSSSSSMGPLEDLSSDLLLLERKDPSTINGKWHLVSEKGSYEIVQDADEDMAVNKLPNNPQNASRSWGENIPFTNKHGKQRGHPIFVTRHKLLQERQDEGNSILKKGRFFIRTRRKKKERKPVHHVPLSPRSFNPLRGEANTPFSDRRQNHSLLLHESNETFPPTDLNQTFPSMNLSLIASHPDHNQNLPNDTHQTSSPLDLYQTVTPDEPYQTAPIQDLDPTHSTAVPSHQSSLPEPIQMHDYDLRNKASPTDVSEMFFSLKLKAGHRTTSPDLNQTSLSPELSQTTLSPDPGHVTLSPDLSQTTLSPDLSHTTLSPDLGHTTLSPDLSHTTLSPDLSQTTLSPDLSHTTLSPDLGHTTLSPDLSHTTLSPDLGHATLSPDLSHTTLSPDLGHTTLSPDLGHTTLSPDFSQTTLSPDLGHTTLSSDVSHTTLSPDLSHTTLSPDLSHTTLSPDLGHTTLSPDLSQTTLSPDLGHMTLSPDLSHTTLSPDLGHTTLSPDLSHTTLSPDLGHMTLSPDLGQTTLSLDFGQTTLSPDLSHMTLSSELSHETLSPDLSQVTLSPDLSEIPFSPDLWQTTLSSDLNETTLSPDLRQTSPHPDPDKTSYISESSQSVTLPEFGQTSPFPDLGQRPSPPSHSTLNNTFIPREFNPMVVVGLSRDDGDYVEIIPRQQEENSEEDYVKIDYVEYDDPYQTDVRTDINSSRNPDNIAAWYLRSNNGNRRNYYIAAEELSWDYSKFTQREDIDDVPEHTIYKKVVFRKYLDSTFTKLDPRGEYEEHLGILGPIIRAEVDDVIQVRFKNLASRPYSLHAHGLSYEKSSEGKTYEDDSPEWFKEDNAVQPNSSYTYVWHATERSGPESPGSACRAWAYYSAVNPEKDIHSGLIGPLLICRKGTLHKENNMPVDMREFVLLFMVFDEKKSWYYEKKFTRSWRLTSSEVKNSHKFHAINGMIYNLPGLRMYEQEWVRLHLLNLGGSRDIHVVHFHGQTLLENGTQQHQLGVWPLLPGSFKTLEMKTSKAGWWLLDTEVGENQRAGMQTPFLIIDRECKMPMGLSTGLIADSQIKASEFWGHWQPKLARLNNGGSYNAWITDKFSGESNSKPWIQVDMQREVVFTGIQTQGAKYYLKSYYTTEFNVAYSSDQRNWRIFKGNSTKNVMYFNGNSDASTITENQFDPPVVARYIRISPTESYNKPALRLELQGCEVNGCSTPLGMESGNIKNEQITASSFKKSWWGDYWEPFRARLNAQGRVNAWQAKANNNNQWLQIDLLKIKKITAITTQGCKSLSSEMYVKRYTIQYSDRGVEWKSYREKSSMVDKIFEGNNNIKGHVKNFFNPPIISRFIRIIPKMWNQSIALRLELFGCDIY.

A signal peptide spans 1–22 (MFPALPCPWVLVVLGTSWAAWG). Plastocyanin-like domains lie at 30-193 (RVRQ…LLIC), 203-329 (IQKM…IKNC), 348-525 (KRWE…LLIC), and 535-683 (IQRT…DVKC). 2 F5/8 type A domains span residues 30-329 (RVRQ…IKNC) and 348-683 (KRWE…DVKC). Ca(2+)-binding residues include Asp139 and Asp140. Asn153 carries an N-linked (GlcNAc...) asparagine glycan. Cys167 and Cys193 are disulfide-bonded. N-linked (GlcNAc...) asparagine glycosylation is found at Asn225, Asn239, Asn297, Asn382, Asn460, and Asn467. Cysteines 248 and 329 form a disulfide. Cys499 and Cys525 form a disulfide bridge. An N-linked (GlcNAc...) asparagine glycan is attached at Asn553. An intrachain disulfide couples Cys602 to Cys683. The residue at position 639 (Thr639) is a Phosphothreonine. A b region spans residues 691 to 1611 (SYEIIYEPSS…PDNIAAWYLR (921 aa)). Sulfotyrosine occurs at positions 692 and 696. Positions 703-723 (TLTTRKMHDSSENKEEENDDE) are disordered. Residues Tyr724 and Tyr726 each carry the sulfotyrosine modification. Positions 738 to 1611 (SFRNSSLYQE…PDNIAAWYLR (874 aa)) are cleaved as a propeptide — activation peptide (connecting region). N-linked (GlcNAc...) asparagine glycosylation occurs at Asn741. Sulfotyrosine is present on Tyr745. N-linked (GlcNAc...) asparagine glycans are attached at residues Asn752, Asn760, Asn776, Asn782, Asn899, and Asn960. The tract at residues 764-790 (FIPPSTDRAVDSNSSSPGNISRAPANT) is disordered. Residues 774–790 (DSNSSSPGNISRAPANT) show a composition bias toward polar residues. Over residues 1013 to 1022 (RKKKERKPVH) the composition is skewed to basic residues. The tract at residues 1013–1035 (RKKKERKPVHHVPLSPRSFNPLR) is disordered. N-linked (GlcNAc...) asparagine glycosylation is found at Asn1048, Asn1057, Asn1066, Asn1073, Asn1089, and Asn1174. 3 stretches are compositionally biased toward polar residues: residues 1167–1188 (RTTSPDLNQTSLSPELSQTTLS), 1198–1240 (PDLS…SQTT), and 1252–1269 (PDLGHTTLSPDLSHTTLS). Disordered regions lie at residues 1167-1240 (RTTS…SQTT) and 1252-1334 (PDLG…LSPD). 41 repeat units span residues 1168-1176 (TTSPDLNQT), 1177-1185 (SLSPELSQT), 1186-1194 (TLSPDPGHV), 1195-1203 (TLSPDLSQT), 1204-1212 (TLSPDLSHT), 1213-1221 (TLSPDLGHT), 1222-1230 (TLSPDLSHT), 1231-1239 (TLSPDLSQT), 1240-1248 (TLSPDLSHT), 1249-1257 (TLSPDLGHT), 1258-1266 (TLSPDLSHT), 1267-1275 (TLSPDLGHA), 1276-1284 (TLSPDLSHT), 1285-1293 (TLSPDLGHT), 1294-1302 (TLSPDLGHT), 1303-1311 (TLSPDFSQT), 1312-1320 (TLSPDLGHT), 1321-1329 (TLSSDVSHT), 1330-1338 (TLSPDLSHT), 1339-1347 (TLSPDLSHT), 1348-1356 (TLSPDLGHT), 1357-1365 (TLSPDLSQT), 1366-1374 (TLSPDLGHM), 1375-1383 (TLSPDLSHT), 1384-1392 (TLSPDLGHT), 1393-1401 (TLSPDLSHT), 1402-1410 (TLSPDLGHM), 1411-1419 (TLSPDLGQT), 1420-1428 (TLSLDFGQT), 1429-1437 (TLSPDLSHM), 1438-1446 (TLSSELSHE), 1447-1455 (TLSPDLSQV), 1456-1464 (TLSPDLSEI), 1465-1473 (PFSPDLWQT), 1474-1482 (TLSSDLNET), 1483-1491 (TLSPDLRQT), 1492-1500 (SPHPDPDKT), 1501-1509 (SYISESSQS), 1510-1518 (VTLPEFGQT), 1519-1527 (SPFPDLGQR), and 1531-1539 (PSHSTLNNT). The interval 1168 to 1539 (TTSPDLNQTS…PPSHSTLNNT (372 aa)) is 41 X 9 AA approximate tandem repeats of T-L-S-P-D-L-[GS]-[HQ]-T. The span at 1302-1334 (TTLSPDFSQTTLSPDLGHTTLSSDVSHTTLSPD) shows a compositional bias: polar residues. Asn1480 carries an N-linked (GlcNAc...) asparagine glycan. Composition is skewed to polar residues over residues 1482 to 1493 (TTLSPDLRQTSP) and 1501 to 1520 (SYISESSQSVTLPEFGQTSP). Residues 1482-1539 (TTLSPDLRQTSPHPDPDKTSYISESSQSVTLPEFGQTSPFPDLGQRPSPPSHSTLNNT) form a disordered region. Residue Asn1537 is glycosylated (N-linked (GlcNAc...) asparagine). Sulfotyrosine occurs at positions 1560, 1576, 1581, 1584, and 1588. An N-linked (GlcNAc...) asparagine glycan is attached at Asn1597. 2 consecutive Plastocyanin-like domains span residues 1616 to 1785 (NRRN…LLIC) and 1795 to 1941 (NMPV…DREC). Residues 1616–1941 (NRRNYYIAAE…TPFLIIDREC (326 aa)) form the F5/8 type A 3 domain. Position 1631 is a sulfotyrosine (Tyr1631). Residue Asn1737 is glycosylated (N-linked (GlcNAc...) asparagine). Cys1759 and Cys1785 are oxidised to a cystine. Cu cation is bound by residues His1877 and His1879. N-linked (GlcNAc...) asparagine glycosylation occurs at Asn1886. Asp1919 lines the Cu cation pocket. Cystine bridges form between Cys1941–Cys2095 and Cys2100–Cys2255. F5/8 type C domains lie at 1941 to 2095 (CKMP…LQGC) and 2100 to 2255 (CSTP…LFGC). N-linked (GlcNAc...) asparagine glycans are attached at residues Asn2044 and Asn2243.

It belongs to the multicopper oxidase family. In terms of assembly, factor Va, the activated form of factor V, is composed of a heavy chain and a light chain, non-covalently bound. The interaction between the two chains is calcium-dependent. Forms heterodimer with SERPINA5. Thrombin activates factor V proteolytically to the active cofactor, factor Va (formation of a heavy chain at the N-terminus and a light chain at the C-terminus).

The protein resides in the secreted. With respect to regulation, inhibited by SERPINA5. Functionally, coagulation factor V is a cofactor that participates with factor Xa to activate prothrombin to thrombin. The chain is Coagulation factor V (F5) from Sus scrofa (Pig).